The sequence spans 74 residues: U3-agatoxin-Ao1f (74 aa).

An N-terminal signal peptide occupies residues 1-20 (MRAIISLLLISTMVFGVIEA). The propeptide occupies 21 to 34 (VSLEEGLKIFEGER). 4 disulfides stabilise this stretch: Cys-37/Cys-53, Cys-44/Cys-58, Cys-52/Cys-68, and Cys-60/Cys-66. At Asn-72 the chain carries Asparagine amide.

Belongs to the neurotoxin 07 (Beta/delta-agtx) family. 03 (aga-4) subfamily. Aga sub-subfamily. As to expression, expressed by the venom gland.

The protein resides in the secreted. Functionally, insecticidal neurotoxin that modulates the insect Nav channel (DmNaV1/tipE (para/tipE)) in a unique manner, with both the activation and inactivation processes being affected. The voltage dependence of activation is shifted toward more hyperpolarized potentials (analogous to site 4 toxins) and a non-inactivating persistent sodium current is induced (site 3-like action). Interestingly, both effects take place in a voltage-dependent manner, producing a bell-shaped curve between -80 and 0 mV. In vivo, induces an irreversible spastic paralysis when injected into insects. The polypeptide is U3-agatoxin-Ao1f (Agelena orientalis (Funnel-web spider)).